Reading from the N-terminus, the 261-residue chain is Intermembrane phospholipid transport system permease protein MlaE (261 aa).

Topologically, residues 1–12 are cytoplasmic; the sequence is MIVNFISALGKQ. Residues 13-33 traverse the membrane as a helical segment; that stretch reads VIDFFRALGRAGFMLFGALIG. Residues 34–49 lie on the Periplasmic side of the membrane; sequence KPQIRKHFPLLVKQMH. Residues 50–70 traverse the membrane as a helical segment; sequence VLGVQSLLIILLSGLFIGMVL. Topologically, residues 71 to 147 are cytoplasmic; that stretch reads GLQGYVVLID…DPLRRVIAPR (77 aa). Residues 148–168 form a helical membrane-spanning segment; sequence FWAGVISMPVLSILFIAIGIW. The Periplasmic segment spans residues 169–198; sequence GGSLVGVDWKGVDSGSFWSVMQNSVSWSYD. The helical transmembrane segment at 199–219 threads the bilayer; it reads ILNGFIKAVFFAVAVTWIALF. Residues 220–238 lie on the Cytoplasmic side of the membrane; it reads NGYDCMPTSEGISQATTRT. A helical transmembrane segment spans residues 239-259; the sequence is VVHASLVVLGLDFILTAIMFG. The Periplasmic portion of the chain corresponds to 260-261; the sequence is AG.

This sequence belongs to the MlaE permease family. As to quaternary structure, the complex is composed of two ATP-binding proteins (MlaF), two transmembrane proteins (MlaE), two cytoplasmic solute-binding proteins (MlaB) and six periplasmic solute-binding proteins (MlaD).

The protein localises to the cell inner membrane. Part of the ABC transporter complex MlaFEDB, which is involved in a phospholipid transport pathway that maintains lipid asymmetry in the outer membrane by retrograde trafficking of phospholipids from the outer membrane to the inner membrane. Probably responsible for the translocation of the substrate across the membrane. The protein is Intermembrane phospholipid transport system permease protein MlaE of Haemophilus influenzae (strain ATCC 51907 / DSM 11121 / KW20 / Rd).